A 609-amino-acid chain; its full sequence is Threonine--tRNA ligase (609 aa).

Residues 1-143 (MRVLYLHTER…SFKPGDSRAE (143 aa)) are editing domain. Catalytic regions lie at residues 195–491 (PRYL…PRLP) and 196–491 (RYLE…PRLP). Residues Cys-288, His-339, and His-460 each contribute to the Zn(2+) site.

The protein belongs to the class-II aminoacyl-tRNA synthetase family. In terms of assembly, homodimer. Requires Zn(2+) as cofactor.

It is found in the cytoplasm. It carries out the reaction tRNA(Thr) + L-threonine + ATP = L-threonyl-tRNA(Thr) + AMP + diphosphate + H(+). Catalyzes the attachment of threonine to tRNA(Thr) in a two-step reaction: L-threonine is first activated by ATP to form Thr-AMP and then transferred to the acceptor end of tRNA(Thr). Also edits incorrectly charged L-seryl-tRNA(Thr). The protein is Threonine--tRNA ligase of Pyrobaculum neutrophilum (strain DSM 2338 / JCM 9278 / NBRC 100436 / V24Sta) (Thermoproteus neutrophilus).